The primary structure comprises 156 residues: Transcription elongation factor GreA (156 aa).

Residues 1 to 32 (MKKVRLTREGYEKLKKELEDLKRKFMYEISER) adopt a coiled-coil conformation.

It belongs to the GreA/GreB family.

Its function is as follows. Necessary for efficient RNA polymerase transcription elongation past template-encoded arresting sites. The arresting sites in DNA have the property of trapping a certain fraction of elongating RNA polymerases that pass through, resulting in locked ternary complexes. Cleavage of the nascent transcript by cleavage factors such as GreA or GreB allows the resumption of elongation from the new 3'terminus. GreA releases sequences of 2 to 3 nucleotides. The chain is Transcription elongation factor GreA from Thermotoga maritima (strain ATCC 43589 / DSM 3109 / JCM 10099 / NBRC 100826 / MSB8).